We begin with the raw amino-acid sequence, 475 residues long: Ribulose bisphosphate carboxylase large chain (475 aa).

A propeptide spanning residues 1-2 (MS) is cleaved from the precursor. Pro-3 bears the N-acetylproline mark. Lys-14 carries the N6,N6,N6-trimethyllysine modification. The substrate site is built by Asn-123 and Thr-173. Lys-175 serves as the catalytic Proton acceptor. Lys-177 lines the substrate pocket. Residues Lys-201, Asp-203, and Glu-204 each coordinate Mg(2+). Position 201 is an N6-carboxylysine (Lys-201). The active-site Proton acceptor is His-294. The substrate site is built by Arg-295, His-327, and Ser-379.

This sequence belongs to the RuBisCO large chain family. Type I subfamily. In terms of assembly, heterohexadecamer of 8 large chains and 8 small chains; disulfide-linked. The disulfide link is formed within the large subunit homodimers. Mg(2+) serves as cofactor. The disulfide bond which can form in the large chain dimeric partners within the hexadecamer appears to be associated with oxidative stress and protein turnover.

The protein localises to the plastid. It localises to the chloroplast. The enzyme catalyses 2 (2R)-3-phosphoglycerate + 2 H(+) = D-ribulose 1,5-bisphosphate + CO2 + H2O. The catalysed reaction is D-ribulose 1,5-bisphosphate + O2 = 2-phosphoglycolate + (2R)-3-phosphoglycerate + 2 H(+). RuBisCO catalyzes two reactions: the carboxylation of D-ribulose 1,5-bisphosphate, the primary event in carbon dioxide fixation, as well as the oxidative fragmentation of the pentose substrate in the photorespiration process. Both reactions occur simultaneously and in competition at the same active site. The sequence is that of Ribulose bisphosphate carboxylase large chain from Pinus balfouriana (Foxtail pine).